The following is a 1879-amino-acid chain: Protein TIC 214 (1879 aa).

The next 6 helical transmembrane spans lie at 18–38 (IINSVVVVGLYYGFLTTFSIG), 64–84 (FITGQLMMFISIYYAPLHLAL), 87–107 (PYTITVLALPYLLFHFFWTNP), 124–144 (LSIQCVFLNNLIFQLFNHFIL), 172–192 (VGWLIGHILFMKSVGLILVWI), and 218–238 (IAPIFSIILFITWVYYLGRIP). Disordered regions lie at residues 245–305 (ETSK…IDET) and 586–702 (ISTS…DEPM). Acidic residues-rich tracts occupy residues 253–268 (AETEESEEETDVEIET) and 295–305 (EKEDPDKIDET). Residues 586 to 688 (ISTSTPTSTP…SIPASTSTST (103 aa)) are compositionally biased toward low complexity. Over residues 691 to 701 (IKSKDEPKDEP) the composition is skewed to basic and acidic residues.

It belongs to the TIC214 family. In terms of assembly, part of the Tic complex.

It localises to the plastid. It is found in the chloroplast inner membrane. In terms of biological role, involved in protein precursor import into chloroplasts. May be part of an intermediate translocation complex acting as a protein-conducting channel at the inner envelope. In Cucumis sativus (Cucumber), this protein is Protein TIC 214.